Reading from the N-terminus, the 855-residue chain is MILKSELLDVHTRLGQMLPFVTKRFASVPTAMRTRRRTRRHEREPNLRKRQGGSHSNLKENEDAELKFKLRQMNEFAKNLKMQMQLADSLRRKEEAARAEGIGGDVAEGAIERDSSTVAAALLEGAEPAEAQPAPLNLSQLIMSAQNAEPLLAPELAERIGDGKLVYSALVNKRAQNWDAIVAALYESAEKLRGLDADIVKEKLLLRVSGLSLEGVATLDKLLTDRFGEGRDFDVDMYGVLFETLGEHTQHTQQAKTVVDRMKKLLQRYDACDDPDKKPLTQEILNCCLKVGTAAKSFDDMNYFLSKFVKDYRILPNKVNYDQVLTFYLKNRTLSQAWETFGAMKFMSLSHRPDVATYNLMLQVCDQERNYSKALDLYHEIQDLKMEPDVRTLSMLAKAMASASTDAIVSEGKSDSLRLTGWKFIHEIENNPKYATAKDDPVCAHGVLTTMMALASYDGDVGLARALFYRHAVQSYKKLMKNANMDAVSNPAAAARAAWTQAIDPVLFNYLLMAYSRYQPNKLPILLGYELGAKFRRQLMFNVDYMGRAESDNDMHANIPLLPVMELSSTAEVLNESRALWEFFLSKHINGSLQPQPSARVVSMLEEYRQNHDTFEGFMKEVKSQVKRWQWHAVNRRLMTPITIMSYLSIPLRLGSYEEFAFRYKQTIYTGNELEESVKNFYDPALVTVSDEATVVVDDSEVKVEKYARKIDDRILQIYSFAYKNRVYNDVFELAMKAATKFRDNSLATRVWKERGEFRKTEGYTSMSVKDRIAGDTSFACATVKFFVAEKRFSEAMAVIMSSQKYIDWKYHMVRELHNALVSIEDSVSIRKLLSVVNKQNRLKVLNTESPSLTP.

The interval 29-61 is disordered; the sequence is PTAMRTRRRTRRHEREPNLRKRQGGSHSNLKEN. PPR repeat units follow at residues 234–265, 317–351, and 354–388; these read DVDM…MKKL, NKVN…SLSH, and DVAT…KMEP.

This sequence belongs to the CCM1 family. In terms of assembly, binds to mitochondrial small subunit 15S rRNA.

The protein resides in the mitochondrion. Its function is as follows. Regulates mitochondrial small subunit maturation by controlling 15S rRNA 5'-end processing. Localizes to the 5' precursor of the 15S rRNA in a position that is subsequently occupied by mS47 in the mature yeast mtSSU. Uses structure and sequence-specific RNA recognition, binding to a single-stranded region of the precursor and specifically recognizing bases -6 to -1. The exchange of Ccm1 for mS47 is coupled to the irreversible removal of precursor rRNA that is accompanied by conformational changes of the mitoribosomal proteins uS5m and mS26. These conformational changes signal completion of 5'-end rRNA processing through protection of the mature 5'-end of the 15S rRNA and stabilization of mS47. The removal of the 5' precursor together with the dissociation of Ccm1 may be catalyzed by the 5'-3' exoribonuclease Pet127. Involved in the specific removal of group I introns in mitochondrial encoded transcripts. In Eremothecium gossypii (strain ATCC 10895 / CBS 109.51 / FGSC 9923 / NRRL Y-1056) (Yeast), this protein is Mitochondrial 15S rRNA processing factor CCM1 (CCM1).